A 339-amino-acid chain; its full sequence is Serpentine receptor class gamma-7 (339 aa).

7 helical membrane-spanning segments follow: residues 30-50 (YWIQ…IIIT), 65-85 (WILT…LFVV), 98-118 (FSTI…IYNY), 152-172 (IPLF…NTVI), 200-220 (LHLT…LLLM), 239-259 (SIFI…YAFF), and 268-288 (FLVD…PLIF). The interval 319–339 (PFNNTMPRQESPSPNYDSILA) is disordered.

This sequence belongs to the nematode receptor-like protein srg family.

The protein resides in the membrane. The sequence is that of Serpentine receptor class gamma-7 (srg-7) from Caenorhabditis elegans.